Consider the following 713-residue polypeptide: MFPHEEKLIKERLGREPNEVEKAMLEVMWSEHASYKSSRKWLKLLPTENEHVILGPGEDAGVVKFDDNTAIVVGIESHNHPSAVEPYGGAATGVGGIVRDILCMGARPIALLDPIRFGPLGKERNRYLFEYVVKGIADYGNRIGVPTVGGETEFDESLDNYTLVNVACIGLMRPEELVHSYVEESGLLLVLVGNKTGRDGIHGVTFASEELSENAEEEDRSAVQIPDPFTEKLLIEATLEAVHTGKVKALKDLGGGGLTCASSEMAGKKGFGAVIYADRVPQREPNMNPMEIMISESQERMLFAVRKEDLNEITKIFEKYDLEWTVVGETIEEPRYIVYWNDEKIADLPIDLLADVPIIEWEAKSYDIEKDVQTPEISIEEALLEVLSSPNIVSKAWIWQQYDHEVQGRTVLKPGLDATVLKINDEHGLAFVSDGNPSYSHLNPYHGAMSAVAEVVRNLASVGARPLALVDNLNFASPERPEVYWSFIETIKGLADAAKAFGLAYVSGNVSFYNEVGKKPIKPTPVVAGLGKVKLENITTMDFKDKGDLIAVVGTTKKELGGSELYRIFGINKGIAPRVDLEREKQNVEGILKAIELKLVKAVHDVSKGGLAIALIEMAISGNKGFEVDIEKVPAEGGLSPLEVLFSESHGRFLISFEEKNLEKIKAIFDEFAVIGRVAEEMLIFKHENKEVINSDLRQVKALYNSLPSILGE.

The active site involves His-32. ATP is bound at residue Tyr-35. Mg(2+) is bound at residue Glu-76. Substrate contacts are provided by residues 77 to 80 and Arg-99; that span reads SHNH. The active-site Proton acceptor is the His-78. A Mg(2+)-binding site is contributed by Asp-100. Gln-224 contributes to the substrate binding site. Asp-252 lines the Mg(2+) pocket. Substrate is bound at residue 296-298; it reads ESQ. The ATP site is built by Asp-471 and Gly-508. Asn-509 contacts Mg(2+). Ser-511 provides a ligand contact to substrate.

The protein belongs to the FGAMS family. In terms of assembly, monomer. Part of the FGAM synthase complex composed of 1 PurL, 1 PurQ and 2 PurS subunits.

It localises to the cytoplasm. The enzyme catalyses N(2)-formyl-N(1)-(5-phospho-beta-D-ribosyl)glycinamide + L-glutamine + ATP + H2O = 2-formamido-N(1)-(5-O-phospho-beta-D-ribosyl)acetamidine + L-glutamate + ADP + phosphate + H(+). It functions in the pathway purine metabolism; IMP biosynthesis via de novo pathway; 5-amino-1-(5-phospho-D-ribosyl)imidazole from N(2)-formyl-N(1)-(5-phospho-D-ribosyl)glycinamide: step 1/2. Its function is as follows. Part of the phosphoribosylformylglycinamidine synthase complex involved in the purines biosynthetic pathway. Catalyzes the ATP-dependent conversion of formylglycinamide ribonucleotide (FGAR) and glutamine to yield formylglycinamidine ribonucleotide (FGAM) and glutamate. The FGAM synthase complex is composed of three subunits. PurQ produces an ammonia molecule by converting glutamine to glutamate. PurL transfers the ammonia molecule to FGAR to form FGAM in an ATP-dependent manner. PurS interacts with PurQ and PurL and is thought to assist in the transfer of the ammonia molecule from PurQ to PurL. The sequence is that of Phosphoribosylformylglycinamidine synthase subunit PurL from Thermococcus sibiricus (strain DSM 12597 / MM 739).